A 105-amino-acid chain; its full sequence is MGCCGCGGCGGRCSGGCGGGCGGGCGGGCGGGCGGCGGGCGSYTTCRYYRVGCCSSCCPCCRGCCGGCCSTPVICCCRRTCRSCGCGCGKSCCQQKCCCQKQCCC.

The segment at 4–41 (CGCGGCGGRCSGGCGGGCGGGCGGGCGGGCGGCGGGCG) is 10 X 2 AA repeats of CG.

It belongs to the KRTAP type 28 family.

Its function is as follows. In the hair cortex, hair keratin intermediate filaments are embedded in an interfilamentous matrix, consisting of hair keratin-associated proteins (KRTAP), which are essential for the formation of a rigid and resistant hair shaft through their extensive disulfide bond cross-linking with abundant cysteine residues of hair keratins. The matrix proteins include the high-sulfur and high-glycine-tyrosine keratins. This Homo sapiens (Human) protein is Small cysteine and glycine repeat-containing protein 10.